The primary structure comprises 91 residues: DNA-directed RNA polymerase subunit omega (91 aa).

This sequence belongs to the RNA polymerase subunit omega family. In terms of assembly, the RNAP catalytic core consists of 2 alpha, 1 beta, 1 beta' and 1 omega subunit. When a sigma factor is associated with the core the holoenzyme is formed, which can initiate transcription.

It carries out the reaction RNA(n) + a ribonucleoside 5'-triphosphate = RNA(n+1) + diphosphate. Its function is as follows. Promotes RNA polymerase assembly. Latches the N- and C-terminal regions of the beta' subunit thereby facilitating its interaction with the beta and alpha subunits. The protein is DNA-directed RNA polymerase subunit omega of Yersinia enterocolitica serotype O:8 / biotype 1B (strain NCTC 13174 / 8081).